The sequence spans 630 residues: Arginine--tRNA ligase (630 aa).

Positions 120 to 130 (ANPVHPLHIGH) match the 'HIGH' region motif.

It belongs to the class-I aminoacyl-tRNA synthetase family.

It localises to the cytoplasm. The enzyme catalyses tRNA(Arg) + L-arginine + ATP = L-arginyl-tRNA(Arg) + AMP + diphosphate. The polypeptide is Arginine--tRNA ligase (Pyrobaculum aerophilum (strain ATCC 51768 / DSM 7523 / JCM 9630 / CIP 104966 / NBRC 100827 / IM2)).